Reading from the N-terminus, the 82-residue chain is uncharacterized protein (82 aa).

Positions 11 to 82 constitute a Resolvase/invertase-type recombinase catalytic domain; it reads NVGIYVRVST…HIEQGIMTHC (72 aa). Ser-19 acts as the O-(5'-phospho-DNA)-serine intermediate in catalysis.

Belongs to the site-specific recombinase resolvase family.

This is an uncharacterized protein from Bacillus phage phi105 (Bacteriophage phi-105).